A 466-amino-acid chain; its full sequence is 3-isopropylmalate dehydratase large subunit (466 aa).

Cysteine 347, cysteine 407, and cysteine 410 together coordinate [4Fe-4S] cluster.

This sequence belongs to the aconitase/IPM isomerase family. LeuC type 1 subfamily. As to quaternary structure, heterodimer of LeuC and LeuD. [4Fe-4S] cluster serves as cofactor.

The catalysed reaction is (2R,3S)-3-isopropylmalate = (2S)-2-isopropylmalate. It functions in the pathway amino-acid biosynthesis; L-leucine biosynthesis; L-leucine from 3-methyl-2-oxobutanoate: step 2/4. Its function is as follows. Catalyzes the isomerization between 2-isopropylmalate and 3-isopropylmalate, via the formation of 2-isopropylmaleate. The sequence is that of 3-isopropylmalate dehydratase large subunit from Shewanella pealeana (strain ATCC 700345 / ANG-SQ1).